We begin with the raw amino-acid sequence, 487 residues long: UDP-glucose flavonoid 3-O-glucosyltransferase 7 (487 aa).

The Proton acceptor role is filled by histidine 23. Histidine 23 contributes to the an anthocyanidin binding site. The Charge relay role is filled by aspartate 121. Alanine 345, glutamine 347, histidine 362, tryptophan 365, asparagine 366, serine 367, and glutamate 370 together coordinate UDP-alpha-D-glucose. Glycine 385 is an an anthocyanidin binding site. UDP-alpha-D-glucose is bound by residues glutamate 386 and glutamine 387.

This sequence belongs to the UDP-glycosyltransferase family. In terms of tissue distribution, strongly expressed in achenes and receptacles.

The catalysed reaction is a flavonol + UDP-alpha-D-glucose = a flavonol 3-O-beta-D-glucoside + UDP + H(+). Its function is as follows. Broad spectrum multifunctional glucosyltransferase. Catalyzes the formation of flavonol 3-O- and 4'-O-glucosides during fruit ripening. Accepted substrates include several flavonoids, hydroxycoumarins and beta-naphthols. Uses UDP-Glc as a sugar donor, but not UDP-Gal or UDP-GlcUA. May also be involved in detoxification of xenobiotics. The polypeptide is UDP-glucose flavonoid 3-O-glucosyltransferase 7 (Fragaria ananassa (Strawberry)).